We begin with the raw amino-acid sequence, 398 residues long: Phosphoglycerate kinase (398 aa).

Substrate-binding positions include 24-26, arginine 40, 63-66, arginine 122, and arginine 155; these read DFN and HMGR. Residues lysine 206, glycine 294, glutamate 325, and 354–357 each bind ATP; that span reads GGDS.

This sequence belongs to the phosphoglycerate kinase family. Monomer.

It localises to the cytoplasm. It catalyses the reaction (2R)-3-phosphoglycerate + ATP = (2R)-3-phospho-glyceroyl phosphate + ADP. Its pathway is carbohydrate degradation; glycolysis; pyruvate from D-glyceraldehyde 3-phosphate: step 2/5. The polypeptide is Phosphoglycerate kinase (Picosynechococcus sp. (strain ATCC 27264 / PCC 7002 / PR-6) (Agmenellum quadruplicatum)).